The chain runs to 189 residues: Ribosome maturation factor RimM (189 aa).

Residues 113–189 form the PRC barrel domain; that stretch reads DGEYYWVDLL…TIVADWQPDY (77 aa).

The protein belongs to the RimM family. Binds ribosomal protein uS19.

The protein resides in the cytoplasm. Its function is as follows. An accessory protein needed during the final step in the assembly of 30S ribosomal subunit, possibly for assembly of the head region. Essential for efficient processing of 16S rRNA. May be needed both before and after RbfA during the maturation of 16S rRNA. It has affinity for free ribosomal 30S subunits but not for 70S ribosomes. This is Ribosome maturation factor RimM from Delftia acidovorans (strain DSM 14801 / SPH-1).